The following is a 327-amino-acid chain: MRASIWGTGSYLPKKVLTNADLEKMVETSDEWISTRTGIKERRIASAEEFSSFMGAKAAEKAIEAAKISKSQIDCIVFATAAPDYIFPSSAALAQAYLGIKEVPAFDCLVACTGFLYGLSIAKAYVEAGMYQCVLVIAADKLSSFVNYEDRNTCVLFGDGGSACVVGPSRPGSLKISKVNLGADGKQGDLLRLPAGGSRCPASQDTIQNQQHFITMEGKEVFKHAVRRMEFAAKTCITEAGLQEEDIDWLVPHQANERIIDAIAKRFAVEDSRVFKTLAKYGNTAASSVGIALDELLRTHDIHSKERLLLVAFGGGLSWGAVILQQM.

Residues Cys112 and His253 contribute to the active site. Positions 254 to 258 (QANER) are ACP-binding. The active site involves Asn283.

This sequence belongs to the thiolase-like superfamily. FabH family. Homodimer.

The protein localises to the cytoplasm. The catalysed reaction is malonyl-[ACP] + acetyl-CoA + H(+) = 3-oxobutanoyl-[ACP] + CO2 + CoA. Its pathway is lipid metabolism; fatty acid biosynthesis. Functionally, catalyzes the condensation reaction of fatty acid synthesis by the addition to an acyl acceptor of two carbons from malonyl-ACP. Catalyzes the first condensation reaction which initiates fatty acid synthesis and may therefore play a role in governing the total rate of fatty acid production. Possesses both acetoacetyl-ACP synthase and acetyl transacylase activities. Its substrate specificity determines the biosynthesis of branched-chain and/or straight-chain of fatty acids. The sequence is that of Beta-ketoacyl-[acyl-carrier-protein] synthase III from Chlamydia muridarum (strain MoPn / Nigg).